We begin with the raw amino-acid sequence, 1400 residues long: DNA-directed RNA polymerase subunit beta' (1400 aa).

The Zn(2+) site is built by C70, C72, C85, and C88. Positions 460, 462, and 464 each coordinate Mg(2+). 4 residues coordinate Zn(2+): C814, C888, C895, and C898. A disordered region spans residues 1367–1400 (DRQAKRAEAQEGPSAEQATDNLAALLNAGFSSDE).

This sequence belongs to the RNA polymerase beta' chain family. In terms of assembly, the RNAP catalytic core consists of 2 alpha, 1 beta, 1 beta' and 1 omega subunit. When a sigma factor is associated with the core the holoenzyme is formed, which can initiate transcription. It depends on Mg(2+) as a cofactor. Zn(2+) is required as a cofactor.

The catalysed reaction is RNA(n) + a ribonucleoside 5'-triphosphate = RNA(n+1) + diphosphate. In terms of biological role, DNA-dependent RNA polymerase catalyzes the transcription of DNA into RNA using the four ribonucleoside triphosphates as substrates. This Vibrio campbellii (strain ATCC BAA-1116) protein is DNA-directed RNA polymerase subunit beta'.